Here is a 352-residue protein sequence, read N- to C-terminus: Phosphatidylglycerol--prolipoprotein diacylglyceryl transferase (352 aa).

4 consecutive transmembrane segments (helical) span residues 20–40 (WYGL…TWLA), 55–75 (FITY…VLFY), 97–117 (EGGM…LLYA), and 122–142 (VNSL…VFFG). Residue R143 coordinates a 1,2-diacyl-sn-glycero-3-phospho-(1'-sn-glycerol). 3 consecutive transmembrane segments (helical) span residues 248–268 (SQLF…FFLW), 275–295 (GFIA…DEHF), and 314–334 (WLSL…TRAA).

Belongs to the Lgt family.

The protein localises to the cell inner membrane. It carries out the reaction L-cysteinyl-[prolipoprotein] + a 1,2-diacyl-sn-glycero-3-phospho-(1'-sn-glycerol) = an S-1,2-diacyl-sn-glyceryl-L-cysteinyl-[prolipoprotein] + sn-glycerol 1-phosphate + H(+). Its pathway is protein modification; lipoprotein biosynthesis (diacylglyceryl transfer). In terms of biological role, catalyzes the transfer of the diacylglyceryl group from phosphatidylglycerol to the sulfhydryl group of the N-terminal cysteine of a prolipoprotein, the first step in the formation of mature lipoproteins. This is Phosphatidylglycerol--prolipoprotein diacylglyceryl transferase from Bdellovibrio bacteriovorus (strain ATCC 15356 / DSM 50701 / NCIMB 9529 / HD100).